Reading from the N-terminus, the 205-residue chain is Adenylyl-sulfate kinase (205 aa).

Residue 31–38 (GLSGAGKS) participates in ATP binding. Residue S105 is the Phosphoserine intermediate of the active site.

The protein belongs to the APS kinase family.

The enzyme catalyses adenosine 5'-phosphosulfate + ATP = 3'-phosphoadenylyl sulfate + ADP + H(+). The protein operates within sulfur metabolism; hydrogen sulfide biosynthesis; sulfite from sulfate: step 2/3. Catalyzes the synthesis of activated sulfate. The sequence is that of Adenylyl-sulfate kinase from Shewanella denitrificans (strain OS217 / ATCC BAA-1090 / DSM 15013).